A 240-amino-acid chain; its full sequence is Probable transcriptional regulatory protein MXAN_7062 (240 aa).

This sequence belongs to the TACO1 family.

The protein localises to the cytoplasm. This chain is Probable transcriptional regulatory protein MXAN_7062, found in Myxococcus xanthus (strain DK1622).